We begin with the raw amino-acid sequence, 660 residues long: Rhamnogalacturonate lyase B (660 aa).

A signal peptide spans 1 to 18 (MRLGVCFSLAAAASVARA). N-linked (GlcNAc...) asparagine glycans are attached at residues asparagine 25, asparagine 109, asparagine 142, and asparagine 284. The interval 446–466 (RLGTPDKSSGEFRHGAARDPT) is disordered. Residues 453–466 (SSGEFRHGAARDPT) are compositionally biased toward basic and acidic residues. Asparagine 524, asparagine 566, and asparagine 635 each carry an N-linked (GlcNAc...) asparagine glycan.

Belongs to the polysaccharide lyase 4 family.

It localises to the secreted. It carries out the reaction Endotype eliminative cleavage of L-alpha-rhamnopyranosyl-(1-&gt;4)-alpha-D-galactopyranosyluronic acid bonds of rhamnogalacturonan I domains in ramified hairy regions of pectin leaving L-rhamnopyranose at the reducing end and 4-deoxy-4,5-unsaturated D-galactopyranosyluronic acid at the non-reducing end.. In terms of biological role, pectinolytic enzymes consist of four classes of enzymes: pectin lyase, polygalacturonase, pectin methylesterase and rhamnogalacturonase. Degrades the rhamnogalacturonan I (RG-I) backbone of pectin. Active against linseed rhamnogalacturonan. This chain is Rhamnogalacturonate lyase B (rglB), found in Emericella nidulans (strain FGSC A4 / ATCC 38163 / CBS 112.46 / NRRL 194 / M139) (Aspergillus nidulans).